The following is a 509-amino-acid chain: Glutamyl-tRNA(Gln) amidotransferase subunit B, mitochondrial (509 aa).

It belongs to the GatB/GatE family. GatB subfamily. In terms of assembly, subunit of the heterotrimeric GatFAB amidotransferase (AdT) complex, composed of A, B and F subunits.

The protein localises to the mitochondrion. The catalysed reaction is L-glutamyl-tRNA(Gln) + L-glutamine + ATP + H2O = L-glutaminyl-tRNA(Gln) + L-glutamate + ADP + phosphate + H(+). Functionally, allows the formation of correctly charged Gln-tRNA(Gln) through the transamidation of misacylated Glu-tRNA(Gln) in the mitochondria. The reaction takes place in the presence of glutamine and ATP through an activated gamma-phospho-Glu-tRNA(Gln). In Candida dubliniensis (strain CD36 / ATCC MYA-646 / CBS 7987 / NCPF 3949 / NRRL Y-17841) (Yeast), this protein is Glutamyl-tRNA(Gln) amidotransferase subunit B, mitochondrial.